A 401-amino-acid polypeptide reads, in one-letter code: 2,3,4,5-tetrahydropyridine-2,6-dicarboxylate N-succinyltransferase (401 aa).

Glu269 acts as the Acyl-anhydride intermediate in catalysis. Succinyl-CoA is bound by residues Arg271, Gly286, Ser289, Ala312, 327–328 (DA), Gly335, and Lys364.

This sequence belongs to the type 2 tetrahydrodipicolinate N-succinyltransferase family. In terms of assembly, homotrimer.

The protein resides in the cytoplasm. It carries out the reaction (S)-2,3,4,5-tetrahydrodipicolinate + succinyl-CoA + H2O = (S)-2-succinylamino-6-oxoheptanedioate + CoA. It functions in the pathway amino-acid biosynthesis; L-lysine biosynthesis via DAP pathway; LL-2,6-diaminopimelate from (S)-tetrahydrodipicolinate (succinylase route): step 1/3. Functionally, catalyzes the conversion of the cyclic tetrahydrodipicolinate (THDP) into the acyclic N-succinyl-L-2-amino-6-oxopimelate using succinyl-CoA. The polypeptide is 2,3,4,5-tetrahydropyridine-2,6-dicarboxylate N-succinyltransferase (Helicobacter pylori (strain ATCC 700392 / 26695) (Campylobacter pylori)).